The primary structure comprises 264 residues: Thymidylate synthase (264 aa).

Residue arginine 21 coordinates dUMP. Histidine 51 serves as a coordination point for (6R)-5,10-methylene-5,6,7,8-tetrahydrofolate. 126–127 (RR) is a binding site for dUMP. Cysteine 146 acts as the Nucleophile in catalysis. DUMP contacts are provided by residues 166-169 (RSGD), asparagine 177, and 207-209 (HLY). Residue aspartate 169 participates in (6R)-5,10-methylene-5,6,7,8-tetrahydrofolate binding. Alanine 263 contacts (6R)-5,10-methylene-5,6,7,8-tetrahydrofolate.

Belongs to the thymidylate synthase family. Bacterial-type ThyA subfamily. In terms of assembly, homodimer.

It is found in the cytoplasm. The enzyme catalyses dUMP + (6R)-5,10-methylene-5,6,7,8-tetrahydrofolate = 7,8-dihydrofolate + dTMP. The protein operates within pyrimidine metabolism; dTTP biosynthesis. Its function is as follows. Catalyzes the reductive methylation of 2'-deoxyuridine-5'-monophosphate (dUMP) to 2'-deoxythymidine-5'-monophosphate (dTMP) while utilizing 5,10-methylenetetrahydrofolate (mTHF) as the methyl donor and reductant in the reaction, yielding dihydrofolate (DHF) as a by-product. This enzymatic reaction provides an intracellular de novo source of dTMP, an essential precursor for DNA biosynthesis. This is Thymidylate synthase from Xanthomonas campestris pv. campestris (strain 8004).